An 86-amino-acid polypeptide reads, in one-letter code: Large ribosomal subunit protein bL27 (86 aa).

Residues 1–21 (MAHKKAAGSSRNGRDSESKRL) are disordered.

This sequence belongs to the bacterial ribosomal protein bL27 family.

The chain is Large ribosomal subunit protein bL27 from Hahella chejuensis (strain KCTC 2396).